The following is a 189-amino-acid chain: MSSTSSPTYTISKTLNTNYPLIDNDPHFRRVIGYARPSDYVHGTVAGAAGPGLLYLMEKMAPSGVGKGGFPKAMRLATAVGFFGGFLYFYQRSILRFYGMSENAREVQMDMREMVDKVKAGQPLYGVSTLPVDVQGMAARQSRYSALFFAVLPWFNFVNHNQHGVDTAKYYQQAERELEAERLGKGSSS.

A helical transmembrane segment spans residues 73 to 88; sequence AMRLATAVGFFGGFLY.

In terms of assembly, complex I is composed of about 40 different subunits. In terms of processing, the N-terminus is blocked.

The protein resides in the mitochondrion inner membrane. It carries out the reaction a ubiquinone + NADH + 5 H(+)(in) = a ubiquinol + NAD(+) + 4 H(+)(out). Functionally, transfer of electrons from NADH to the respiratory chain. The immediate electron acceptor for the enzyme is believed to be ubiquinone. In Neurospora crassa (strain ATCC 24698 / 74-OR23-1A / CBS 708.71 / DSM 1257 / FGSC 987), this protein is NADH-ubiquinone oxidoreductase 20.9 kDa subunit (nuo20.9).